The chain runs to 1368 residues: DNA-directed RNA polymerase subunit beta (1368 aa).

The protein belongs to the RNA polymerase beta chain family. In terms of assembly, the RNAP catalytic core consists of 2 alpha, 1 beta, 1 beta' and 1 omega subunit. When a sigma factor is associated with the core the holoenzyme is formed, which can initiate transcription.

The catalysed reaction is RNA(n) + a ribonucleoside 5'-triphosphate = RNA(n+1) + diphosphate. DNA-dependent RNA polymerase catalyzes the transcription of DNA into RNA using the four ribonucleoside triphosphates as substrates. This is DNA-directed RNA polymerase subunit beta from Burkholderia thailandensis (strain ATCC 700388 / DSM 13276 / CCUG 48851 / CIP 106301 / E264).